Here is a 343-residue protein sequence, read N- to C-terminus: UPF0284 protein Msed_0735 (343 aa).

This sequence belongs to the UPF0284 family.

The chain is UPF0284 protein Msed_0735 from Metallosphaera sedula (strain ATCC 51363 / DSM 5348 / JCM 9185 / NBRC 15509 / TH2).